The following is a 57-amino-acid chain: Andropin (57 aa).

A signal peptide spans 1–23 (MKYFVVLVVLALILAISVGPSDA).

The protein belongs to the andropin family. In terms of tissue distribution, ejaculatory duct of adult males.

The protein localises to the secreted. In terms of biological role, male-specific peptide with moderate activity against Gram-positive bacteria. This is Andropin (Anp) from Drosophila melanogaster (Fruit fly).